The primary structure comprises 458 residues: MSKKLWGGRFEKGTDKVVEDFHSSIRFDQRLYKQDIRGSIAHARMLGRQGIIAASEAEQIIEGLEKIMADIEAGRVEFDVAAEDIHMNIEKILTERIGDVGKKLHTGRSRNDQVALDVRLYLRDEITETGRLLRELITVLLERAEEHVDTIMPGYTHLQKAQPITLAHHLLAYVQMFGRDCSRLVDCAKRFNISPLGSGALAGTTFPLDRMAVAQELGFDGITENSLDGVSDRDFAIEFCGAASLIMMHLSRFCEEIILWSSQEFSFIELDDAYSTGSSMMPQKKNPDVAELIRGKTGRVYGDLMALLTVMKSLPLAYNKDMQEDKENLFDAVDTVKGCLAVFTPMIRTMRVRGERMKAGAKGGFTNATDVADYLAKKGVSFREAHEIVGKMVLMCVQKSVALEDLSFEDFRACSEAFEEDVFDAIRVERCVADRKVPGGPAPDAVKAAIQAARERLS.

The protein belongs to the lyase 1 family. Argininosuccinate lyase subfamily.

The protein localises to the cytoplasm. It carries out the reaction 2-(N(omega)-L-arginino)succinate = fumarate + L-arginine. The protein operates within amino-acid biosynthesis; L-arginine biosynthesis; L-arginine from L-ornithine and carbamoyl phosphate: step 3/3. This Heliobacterium mobile (Heliobacillus mobilis) protein is Argininosuccinate lyase.